The primary structure comprises 84 residues: Sulfur carrier protein TusA (84 aa).

Catalysis depends on C19, which acts as the Cysteine persulfide intermediate.

The protein belongs to the sulfur carrier protein TusA family. As to quaternary structure, interacts with IscS.

The protein resides in the cytoplasm. Its pathway is tRNA modification. Sulfur carrier protein involved in sulfur trafficking in the cell. Part of a sulfur-relay system required for 2-thiolation during synthesis of 2-thiouridine of the modified wobble base 5-methylaminomethyl-2-thiouridine (mnm(5)s(2)U) in tRNA. Interacts with IscS and stimulates its cysteine desulfurase activity. Accepts an activated sulfur from IscS, which is then transferred to TusD, and thus determines the direction of sulfur flow from IscS to 2-thiouridine formation. Also appears to be involved in sulfur transfer for the biosynthesis of molybdopterin. The sequence is that of Sulfur carrier protein TusA from Sodalis glossinidius (strain morsitans).